The primary structure comprises 892 residues: Alpha-actinin-1 (892 aa).

Methionine 1 carries the N-acetylmethionine modification. An actin-binding region spans residues 1-247 (MDHYDSQQTN…IMTYVSSFYH (247 aa)). Serine 6 is modified (phosphoserine). At tyrosine 12 the chain carries Phosphotyrosine; by FAK1. 2 consecutive Calponin-homology (CH) domains span residues 31 to 135 (KQQR…LRFA) and 144 to 250 (TSAK…HAFS). 2 positions are modified to N6-acetyllysine: lysine 95 and lysine 195. Spectrin repeat units follow at residues 274–384 (QLME…WLLN), 394–499 (HLAE…ALER), 509–620 (QLYL…ALTE), and 630–733 (RLRK…EVEN). The segment at 274-733 (QLMEDYEKLA…IARTINEVEN (460 aa)) is interaction with DDN. A Phosphoserine modification is found at serine 471. Lysine 676 is modified (N6-acetyllysine). Serine 677 carries the post-translational modification Phosphoserine. EF-hand domains lie at 746–781 (EQMN…LGYD) and 787–822 (QGEA…ETAD). The Ca(2+) site is built by aspartate 759, aspartate 761, serine 763, threonine 765, and glutamate 770. The residue at position 890 (serine 890) is a Phosphoserine.

It belongs to the alpha-actinin family. Homodimer; antiparallel. Interacts with MYOZ2, TTID and LPP. Interacts with DDN. Interacts with PSD. Interacts with MICALL2. Interacts with DNM2 and CTTN. Interacts with PDLIM1. Interacts with PDLIM2. Interacts with PDLIM4 (via PDZ domain). Interacts with IGSF8.

Its subcellular location is the cytoplasm. It is found in the cytoskeleton. The protein localises to the myofibril. The protein resides in the sarcomere. It localises to the z line. Its subcellular location is the cell membrane. It is found in the cell junction. The protein localises to the cell projection. The protein resides in the ruffle. F-actin cross-linking protein which is thought to anchor actin to a variety of intracellular structures. Association with IGSF8 regulates the immune synapse formation and is required for efficient T-cell activation. In Homo sapiens (Human), this protein is Alpha-actinin-1 (ACTN1).